The sequence spans 129 residues: Follitropin subunit beta (129 aa).

Positions 1–20 (MKTVQFCFLFCCWKAICCNS) are cleaved as a signal peptide. 6 cysteine pairs are disulfide-bonded: Cys21–Cys69, Cys35–Cys84, Cys38–Cys122, Cys46–Cys100, Cys50–Cys102, and Cys105–Cys112. Residues Asn25 and Asn42 are each glycosylated (N-linked (GlcNAc...) asparagine).

This sequence belongs to the glycoprotein hormones subunit beta family. In terms of assembly, heterodimer. The active follitropin is a heterodimer composed of an alpha chain/CGA shared with other hormones and a unique beta chain/FSHB shown here.

Its subcellular location is the secreted. Its function is as follows. Together with the alpha chain CGA constitutes follitropin, the follicle-stimulating hormone, and provides its biological specificity to the hormone heterodimer. Binds FSHR, a G protein-coupled receptor, on target cells to activate downstream signaling pathways. Follitropin is involved in follicle development and spermatogenesis in reproductive organs. The chain is Follitropin subunit beta (FSHB) from Saimiri boliviensis boliviensis (Bolivian squirrel monkey).